The following is a 34-amino-acid chain: Photosystem II reaction center protein T (34 aa).

A helical membrane pass occupies residues 3–23; that stretch reads ALVYTFLLVGTLGIIFFAIFF.

The protein belongs to the PsbT family. PSII is composed of 1 copy each of membrane proteins PsbA, PsbB, PsbC, PsbD, PsbE, PsbF, PsbH, PsbI, PsbJ, PsbK, PsbL, PsbM, PsbT, PsbY, PsbZ, Psb30/Ycf12, at least 3 peripheral proteins of the oxygen-evolving complex and a large number of cofactors. It forms dimeric complexes.

The protein localises to the plastid. The protein resides in the chloroplast thylakoid membrane. Its function is as follows. Found at the monomer-monomer interface of the photosystem II (PS II) dimer, plays a role in assembly and dimerization of PSII. PSII is a light-driven water plastoquinone oxidoreductase, using light energy to abstract electrons from H(2)O, generating a proton gradient subsequently used for ATP formation. The polypeptide is Photosystem II reaction center protein T (Klebsormidium bilatum (Filamentous green alga)).